The primary structure comprises 310 residues: Malate dehydrogenase (310 aa).

NAD(+) contacts are provided by residues 7 to 12 (GAGNVG) and aspartate 32. Positions 81 and 87 each coordinate substrate. NAD(+) contacts are provided by residues asparagine 94 and 117–119 (VSN). Residues asparagine 119 and arginine 150 each contribute to the substrate site. The Proton acceptor role is filled by histidine 174.

This sequence belongs to the LDH/MDH superfamily. MDH type 3 family. Homotetramer; arranged as a dimer of dimers.

The catalysed reaction is (S)-malate + NAD(+) = oxaloacetate + NADH + H(+). Functionally, catalyzes the reversible oxidation of malate to oxaloacetate. The sequence is that of Malate dehydrogenase from Prosthecochloris vibrioformis (Chlorobium vibrioforme).